A 222-amino-acid polypeptide reads, in one-letter code: Ribonuclease T (222 aa).

One can recognise an Exonuclease domain in the interval 20 to 194; it reads VVIDVETAGF…YDTERTAELF (175 aa). 4 residues coordinate Mg(2+): D23, E25, H181, and D186. H181 functions as the Proton donor/acceptor in the catalytic mechanism.

The protein belongs to the RNase T family. As to quaternary structure, homodimer. Mg(2+) is required as a cofactor.

In terms of biological role, trims short 3' overhangs of a variety of RNA species, leaving a one or two nucleotide 3' overhang. Responsible for the end-turnover of tRNA: specifically removes the terminal AMP residue from uncharged tRNA (tRNA-C-C-A). Also appears to be involved in tRNA biosynthesis. The sequence is that of Ribonuclease T from Shewanella sp. (strain ANA-3).